A 187-amino-acid chain; its full sequence is Protein SCM4 (187 aa).

3 consecutive transmembrane segments (helical) span residues 11–31, 45–65, and 80–100; these read IAVS…VISI, VLCT…GAFG, and LLCG…VSLF. Positions 114 to 134 are enriched in basic and acidic residues; sequence DLEKQKDEKLPQHHPEVKDGE. The disordered stretch occupies residues 114 to 135; it reads DLEKQKDEKLPQHHPEVKDGEA. Residues 162–182 traverse the membrane as a helical segment; the sequence is MSLHMSIVTGITIFTFGKCIL.

The protein belongs to the ATG33 family.

It localises to the membrane. This Saccharomyces cerevisiae (strain ATCC 204508 / S288c) (Baker's yeast) protein is Protein SCM4 (SCM4).